A 359-amino-acid chain; its full sequence is S-geranylgeranyl-glutathione receptor P2RY8 (359 aa).

The Extracellular segment spans residues 1–19; that stretch reads MQVPNSTGPDNATLQMLRN. N-linked (GlcNAc...) asparagine glycosylation is found at Asn5 and Asn11. Residues 20–40 traverse the membrane as a helical segment; that stretch reads PAIAVALPVVYSLVAAVSIPG. The Cytoplasmic portion of the chain corresponds to 41-57; sequence NLFSLWVLCRRMGPRSP. A helical transmembrane segment spans residues 58–78; it reads SVIFMINLSVTDLMLASVLPF. Residues 79-88 lie on the Extracellular side of the membrane; that stretch reads QIYYHCNRHH. The chain crosses the membrane as a helical span at residues 89–109; sequence WVFGVLLCNVVTVAFYANMYS. The Cytoplasmic segment spans residues 110-138; it reads SILTMTCISVERFLGVLYPLSSKRWRRRR. Residues 139 to 159 traverse the membrane as a helical segment; the sequence is YAVAACAGTWLLLLTALSPLA. The Extracellular portion of the chain corresponds to 160–187; the sequence is RTDLTYPVHALGIITCFDVLKWTMLPSV. The helical transmembrane segment at 188 to 208 threads the bilayer; the sequence is AMWAVFLFTIFILLFLIPFVI. The Cytoplasmic segment spans residues 209–237; the sequence is TVACYTATILKLLRTEEAHGREQRRRAVG. Residues 238–258 traverse the membrane as a helical segment; it reads LAAVVLLAFVTCFAPNNFVLL. At 259–275 the chain is on the extracellular side; that stretch reads AHIVSRLFYGKSYYHVY. A helical transmembrane segment spans residues 276-296; that stretch reads KLTLCLSCLNNCLDPFVYYFA. Over 297–359 the chain is Cytoplasmic; it reads SREFQLRLRE…PGLQRQESVF (63 aa). Residues 329–359 are disordered; sequence RTTSVRSEAGAHPEGMEGATRPGLQRQESVF.

It belongs to the G-protein coupled receptor 1 family. Barely detectable in normal blood leukocytes. Weaker expression was seen in heart, kidney and lung. Not detected in brain. Expressed in B cells and follicular helper T cells in germinal centers (at protein level).

It localises to the cell membrane. In terms of biological role, g protein-coupled receptor for S-geranylgeranyl-glutathione (GGG), an endogenous metabolite present in lymphoid tissues. Couples the binding of GGG to the activation of GNA13 and downstream repression of AKT activation in lymphocytes defining their positioning and growth within lymphoid organs. In lymphoid follicles, confines B cells and follicular helper T cells in germinal centers (GCs) in response to GGG local gradients established by GGT5 (via GGG catabolism) and ABCC1 (via extracellular transport) with lower concentrations of GGG found in the follicular dendritic cell network region around which germinal centers are formed. In the bone marrow, also in response to GGG gradients established by GGT5 and ABCC1, it restricts chemotactic transmigration of B cells, T cells and NK cells from blood vessels to the bone marrow parenchyma. Contributes to GNA13-dependent pathway that suppresses GC B cell growth. In Homo sapiens (Human), this protein is S-geranylgeranyl-glutathione receptor P2RY8.